A 225-amino-acid chain; its full sequence is UPF0173 metal-dependent hydrolase Fjoh_2786 (225 aa).

The protein belongs to the UPF0173 family.

The protein is UPF0173 metal-dependent hydrolase Fjoh_2786 of Flavobacterium johnsoniae (strain ATCC 17061 / DSM 2064 / JCM 8514 / BCRC 14874 / CCUG 350202 / NBRC 14942 / NCIMB 11054 / UW101) (Cytophaga johnsonae).